The primary structure comprises 363 residues: Peptide chain release factor 1 (363 aa).

Gln-237 is subject to N5-methylglutamine. A compositionally biased stretch (basic and acidic residues) spans Glu-286–Thr-295. Residues Glu-286–Arg-305 are disordered.

Belongs to the prokaryotic/mitochondrial release factor family. Methylated by PrmC. Methylation increases the termination efficiency of RF1.

The protein resides in the cytoplasm. Functionally, peptide chain release factor 1 directs the termination of translation in response to the peptide chain termination codons UAG and UAA. The protein is Peptide chain release factor 1 of Shewanella amazonensis (strain ATCC BAA-1098 / SB2B).